An 81-amino-acid polypeptide reads, in one-letter code: Small ribosomal subunit protein bS18 (81 aa).

It belongs to the bacterial ribosomal protein bS18 family. As to quaternary structure, part of the 30S ribosomal subunit. Forms a tight heterodimer with protein bS6.

Functionally, binds as a heterodimer with protein bS6 to the central domain of the 16S rRNA, where it helps stabilize the platform of the 30S subunit. This chain is Small ribosomal subunit protein bS18, found in Syntrophobacter fumaroxidans (strain DSM 10017 / MPOB).